A 311-amino-acid chain; its full sequence is Porphobilinogen deaminase (311 aa).

Cys242 bears the S-(dipyrrolylmethanemethyl)cysteine mark.

The protein belongs to the HMBS family. As to quaternary structure, monomer. The cofactor is dipyrromethane.

It carries out the reaction 4 porphobilinogen + H2O = hydroxymethylbilane + 4 NH4(+). It functions in the pathway porphyrin-containing compound metabolism; protoporphyrin-IX biosynthesis; coproporphyrinogen-III from 5-aminolevulinate: step 2/4. Its function is as follows. Tetrapolymerization of the monopyrrole PBG into the hydroxymethylbilane pre-uroporphyrinogen in several discrete steps. The sequence is that of Porphobilinogen deaminase from Hahella chejuensis (strain KCTC 2396).